The primary structure comprises 916 residues: Probable dipeptidyl-aminopeptidase B (916 aa).

Disordered stretches follow at residues 1–35 and 67–86; these read MGRTGDLENAEFFPMTRRRSTSGTSSRSSTDSGLS and DAEADVDEPFLPTSSKKLGS. Over 1 to 92 the chain is Cytoplasmic; that stretch reads MGRTGDLENA…KLGSGSRTRQ (92 aa). Residues 21-35 show a composition bias toward low complexity; the sequence is TSGTSSRSSTDSGLS. The helical; Signal-anchor for type II membrane protein transmembrane segment at 93-113 threads the bilayer; that stretch reads IFWALVILCLGGWVLALVLFL. Over 114 to 916 the chain is Vacuolar; that stretch reads THGRASSQTA…VKRSVPAFAH (803 aa). N-linked (GlcNAc...) asparagine glycans are attached at residues asparagine 349 and asparagine 640. The active-site Charge relay system is the serine 754. Asparagine 808 and asparagine 813 each carry an N-linked (GlcNAc...) asparagine glycan. Residues aspartate 831 and histidine 864 each act as charge relay system in the active site.

It belongs to the peptidase S9B family.

It is found in the vacuole membrane. It catalyses the reaction Release of an N-terminal dipeptide, Xaa-Yaa-|-Zaa-, from a polypeptide, preferentially when Yaa is Pro, provided Zaa is neither Pro nor hydroxyproline.. In terms of biological role, type IV dipeptidyl-peptidase which removes N-terminal dipeptides sequentially from polypeptides having unsubstituted N-termini provided that the penultimate residue is proline. The sequence is that of Probable dipeptidyl-aminopeptidase B (dapB) from Aspergillus flavus (strain ATCC 200026 / FGSC A1120 / IAM 13836 / NRRL 3357 / JCM 12722 / SRRC 167).